Consider the following 134-residue polypeptide: Large ribosomal subunit protein uL16c (134 aa).

This sequence belongs to the universal ribosomal protein uL16 family. In terms of assembly, part of the 50S ribosomal subunit.

The protein resides in the plastid. It localises to the chloroplast. The protein is Large ribosomal subunit protein uL16c of Pinus thunbergii (Japanese black pine).